The chain runs to 379 residues: Probable RNA methyltransferase RB6963 (379 aa).

The active-site Proton acceptor is the E89. A Radical SAM core domain is found at 96 to 332 (ATGRTTLCVS…VRYSLGNDIE (237 aa)). The cysteines at positions 103 and 335 are disulfide-linked. 3 residues coordinate [4Fe-4S] cluster: C110, C114, and C117. Residues 160–161 (GE), S192, 215–217 (SLH), and N291 contribute to the S-adenosyl-L-methionine site. Catalysis depends on C335, which acts as the S-methylcysteine intermediate.

This sequence belongs to the radical SAM superfamily. RlmN family. The cofactor is [4Fe-4S] cluster.

The protein resides in the cytoplasm. This Rhodopirellula baltica (strain DSM 10527 / NCIMB 13988 / SH1) protein is Probable RNA methyltransferase RB6963.